The sequence spans 317 residues: MPKRGKKAAADDGEEPKSEPETKKSKGAAKKTEKEAAGEGPVLYEDPPDQKTSPSGKSATLKICSWNVDGLRAWIKKKGLDWVKEEAPDILCLQETKCSENKLPAELQELPGLTHQYWSAPSDKEGYSGVGLLSRQCPLKVSYGIGEEEHDQEGRVIVAEFESFVLVTAYVPNAGRGLVRLEYRQRWDEAFRKFLKDLASRKPLVLCGDLNVAHEEIDLRNPKGNKKNAGFTPQERQGFGELLQAVPLADSFRHLYPNTAYAYTFWTYMMNARSKNVGWRLDYFLLSHSLLPALCDSKIRSKALGSDHCPITLYLAL.

The disordered stretch occupies residues 1–58 (MPKRGKKAAADDGEEPKSEPETKKSKGAAKKTEKEAAGEGPVLYEDPPDQKTSPSGKS). The tract at residues 2 to 32 (PKRGKKAAADDGEEPKSEPETKKSKGAAKKT) is necessary for interaction with YBX1, binding to RNA, association together with NPM1 to rRNA, endoribonuclease activity on abasic RNA and localization in the nucleoli. Residues lysine 6 and lysine 7 each carry the N6-acetyllysine; by EP300 modification. The Nuclear localization signal (NLS) motif lies at 8–12 (AAADD). Over residues 15-37 (EPKSEPETKKSKGAAKKTEKEAA) the composition is skewed to basic and acidic residues. Serine 18 carries the post-translational modification Phosphoserine. The necessary for interaction with NPM1 and for efficient rRNA binding stretch occupies residues 22-32 (TKKSKGAAKKT). An N6-acetyllysine mark is found at lysine 26, lysine 30, lysine 31, and lysine 34. Position 53 is a phosphoserine (serine 53). The Nuclear export signal (NES) motif lies at 63–79 (ICSWNVDGLRAWIKKKG). Cysteine 64 is subject to S-nitrosocysteine; alternate. An intrachain disulfide couples cysteine 64 to cysteine 92. Mg(2+) is bound at residue aspartate 69. Residue cysteine 92 is modified to S-nitrosocysteine; alternate. Glutamate 95 lines the Mg(2+) pocket. Tyrosine 170 is a catalytic residue. N6-acetyllysine is present on lysine 196. Mg(2+) contacts are provided by aspartate 209 and asparagine 211. Aspartate 209 (proton donor/acceptor) is an active-site residue. A Phosphothreonine; by CDK5 modification is found at threonine 232. Residues 288–317 (HSLLPALCDSKIRSKALGSDHCPITLYLAL) form a mitochondrial targeting sequence (MTS) region. Aspartate 307 serves as a coordination point for Mg(2+). Position 309 is an S-nitrosocysteine (cysteine 309).

Belongs to the DNA repair enzymes AP/ExoA family. Monomer. Homodimer; disulfide-linked. Component of the SET complex, composed of at least APEX1, SET, ANP32A, HMGB2, NME1 and TREX1. Associates with the dimer XRCC5/XRCC6 in a DNA-dependent manner. Interacts with SIRT1; the interaction is increased in the context of genotoxic stress. Interacts with HDAC1, HDAC2 and HDAC3; the interactions are not dependent on the APEX1 acetylation status. Interacts with XRCC1; the interaction is induced by SIRT1 and increased with the APEX1 acetylated form. Interacts with NPM1 (via N-terminal domain); the interaction is RNA-dependent and decreases in hydrogen peroxide-damaged cells. Interacts (via N-terminus) with YBX1 (via C-terminus); the interaction is increased in presence of APEX1 acetylated at Lys-6 and Lys-7. Interacts with HNRNPL; the interaction is DNA-dependent. Interacts (via N-terminus) with KPNA1 and KPNA2. Interacts with TXN; the interaction stimulates the FOS/JUN AP-1 complex DNA-binding activity in a redox-dependent manner. Interacts with GZMA, KRT8, MDM2, POLB, PRDX6, PRPF19, RPLP0, TOMM20 and WDR77. Binds to CDK5. It depends on Mg(2+) as a cofactor. Mn(2+) is required as a cofactor. In terms of processing, phosphorylated. Phosphorylation by kinase PKC or casein kinase CK2 results in enhanced redox activity that stimulates binding of the FOS/JUN AP-1 complex to its cognate binding site. AP-endodeoxyribonuclease activity is not affected by CK2-mediated phosphorylation. Phosphorylation of Thr-232 by CDK5 in response to MPP(+)/MPTP (1-methyl-4-phenylpyridinium) reduces AP-endodeoxyribonuclease activity resulting in accumulation of DNA damage and contributing to neuronal death. Post-translationally, acetylated on Lys-6 and Lys-7. Acetylation is increased by the transcriptional coactivator EP300 acetyltransferase, genotoxic agents like H(2)O(2) and methyl methanesulfonate (MMS). Acetylation increases its binding affinity to the negative calcium response element (nCaRE) DNA promoter. The acetylated form induces a stronger binding of YBX1 to the Y-box sequence in the MDR1 promoter than the unacetylated form. Deacetylated on lysines. Lys-6 and Lys-7 are deacetylated by SIRT1. Cleaved at Lys-30 by granzyme A to create the mitochondrial form; leading in reduction of binding to DNA, AP endodeoxyribonuclease activity, redox activation of transcription factors and to enhanced cell death. Cleaved by granzyme K; leading to intracellular ROS accumulation and enhanced cell death after oxidative stress. In terms of processing, cys-64 and Cys-92 are nitrosylated in response to nitric oxide (NO) and lead to the exposure of the nuclear export signal (NES). Post-translationally, ubiquitinated by MDM2; leading to translocation to the cytoplasm and proteasomal degradation. Expressed in both resting and stimulated B cells stimulated to switch (at protein level).

The protein resides in the nucleus. It localises to the nucleolus. The protein localises to the nucleus speckle. It is found in the endoplasmic reticulum. Its subcellular location is the cytoplasm. The protein resides in the mitochondrion. It catalyses the reaction a deoxyribonucleotide-2'-deoxyribose-5'-monophosphate-DNA + H2O = a 5'-end 2'-deoxyribose-5'-monophosphate-DNA + a 3'-end 2'-deoxyribonucleotide-DNA + H(+). The catalysed reaction is Exonucleolytic cleavage in the 3'- to 5'-direction to yield nucleoside 5'-phosphates.. It carries out the reaction a 3'-end 2'-deoxyribonucleotide-3'-phosphoglycolate-DNA + H2O = 2-phosphoglycolate + a 3'-end 2'-deoxyribonucleotide-DNA + H(+). The enzyme catalyses a 3'-end 2'-deoxyribonucleotide-8-oxoguanine-DNA + H2O = 8-oxo-dGMP + a 3'-end 2'-deoxyribonucleotide-DNA + H(+). Its activity is regulated as follows. NPM1 stimulates endodeoxyribonuclease activity on double-stranded DNA with AP sites, but inhibits endoribonuclease activity on single-stranded RNA containing AP sites. Multifunctional protein that plays a central role in the cellular response to oxidative stress. The two major activities of APEX1 are DNA repair and redox regulation of transcriptional factors. Functions as an apurinic/apyrimidinic (AP) endodeoxyribonuclease in the base excision repair (BER) pathway of DNA lesions induced by oxidative and alkylating agents. Initiates repair of AP sites in DNA by catalyzing hydrolytic incision of the phosphodiester backbone immediately adjacent to the damage, generating a single-strand break with 5'-deoxyribose phosphate and 3'-hydroxyl ends. Also incises at AP sites in the DNA strand of DNA/RNA hybrids, single-stranded DNA regions of R-loop structures, and single-stranded RNA molecules. Operates at switch sites of immunoglobulin (Ig) constant regions where it mediates Ig isotype class switch recombination. Processes AP sites induced by successive action of AICDA and UNG. Generates staggered nicks in opposite DNA strands resulting in the formation of double-strand DNA breaks that are finally resolved via non-homologous end joining repair pathway. Has 3'-5' exodeoxyribonuclease activity on mismatched deoxyribonucleotides at the 3' termini of nicked or gapped DNA molecules during short-patch BER. Possesses DNA 3' phosphodiesterase activity capable of removing lesions (such as phosphoglycolate and 8-oxoguanine) blocking the 3' side of DNA strand breaks. Also acts as an endoribonuclease involved in the control of single-stranded RNA metabolism. Plays a role in regulating MYC mRNA turnover by preferentially cleaving in between UA and CA dinucleotides of the MYC coding region determinant (CRD). In association with NMD1, plays a role in the rRNA quality control process during cell cycle progression. Acts as a loading factor for POLB onto non-incised AP sites in DNA and stimulates the 5'-terminal deoxyribose 5'-phosphate (dRp) excision activity of POLB. Exerts reversible nuclear redox activity to regulate DNA binding affinity and transcriptional activity of transcriptional factors by controlling the redox status of their DNA-binding domain, such as the FOS/JUN AP-1 complex after exposure to IR. Involved in calcium-dependent down-regulation of parathyroid hormone (PTH) expression by binding to negative calcium response elements (nCaREs). Together with HNRNPL or the dimer XRCC5/XRCC6, associates with nCaRE, acting as an activator of transcriptional repression. May also play a role in the epigenetic regulation of gene expression by participating in DNA demethylation. Stimulates the YBX1-mediated MDR1 promoter activity, when acetylated at Lys-6 and Lys-7, leading to drug resistance. Plays a role in protection from granzyme-mediated cellular repair leading to cell death. Binds DNA and RNA. Associates, together with YBX1, on the MDR1 promoter. Together with NPM1, associates with rRNA. The protein is DNA repair nuclease/redox regulator APEX1 (Apex1) of Mus musculus (Mouse).